We begin with the raw amino-acid sequence, 1158 residues long: Teashirt homolog 1 (1158 aa).

Disordered regions lie at residues 70-126, 170-228, and 310-341; these read DDGR…DMDT, INST…ANNG, and TGHY…EMEG. The segment covering 76-88 has biased composition (polar residues); the sequence is LSYQNSPLSNGTN. 2 stretches are compositionally biased toward low complexity: residues 186-205 and 213-228; these read SHAS…ASAS and SSNS…ANNG. 2 consecutive C2H2-type zinc fingers follow at residues 288-312 and 349-373; these read FRCK…ETGH and LKCM…KTKH. The span at 310–326 shows a compositional bias: basic and acidic residues; the sequence is TGHYRDDNKDKEEDRGK. The interval 405 to 425 is disordered; it reads PCSPDSISSTPGIPLAETAPT. A C2H2-type 3 zinc finger spans residues 461-485; sequence LKCMECGSSHDTLQQLTAHMMVTGH. Disordered stretches follow at residues 516–573, 656–681, and 693–748; these read PPTT…VEKS, LKSL…NHKS, and VTGK…VDKD. Residues 555–573 show a composition bias toward basic and acidic residues; the sequence is EEKKIKQEKEDPSERVEKS. Positions 656-671 are enriched in low complexity; sequence LKSLTSDSSTLIHSPS. Basic and acidic residues-rich tracts occupy residues 693–716 and 724–748; these read VTGK…KHLT and LKER…VDKD. Residues 963-1033 constitute a DNA-binding region (homeobox); that stretch reads RKGRQSNWNP…NVKYQLRRTG (71 aa). C2H2-type zinc fingers lie at residues 1048 to 1070 and 1115 to 1138; these read FLCS…LESH and FQCK…SKTH.

This sequence belongs to the teashirt C2H2-type zinc-finger protein family.

It is found in the nucleus. Its function is as follows. Probable transcriptional regulator involved in developmental processes. May act as a transcriptional repressor (Potential). The polypeptide is Teashirt homolog 1 (tshz1) (Danio rerio (Zebrafish)).